A 617-amino-acid chain; its full sequence is Chaperone protein HscA homolog (617 aa).

The interval methionine 1–glycine 23 is disordered.

The protein belongs to the heat shock protein 70 family.

Chaperone involved in the maturation of iron-sulfur cluster-containing proteins. Has a low intrinsic ATPase activity which is markedly stimulated by HscB. The polypeptide is Chaperone protein HscA homolog (Vibrio vulnificus (strain YJ016)).